We begin with the raw amino-acid sequence, 310 residues long: Putative S-adenosyl-L-methionine-dependent methyltransferase MMAR_0356 (310 aa).

S-adenosyl-L-methionine is bound by residues aspartate 137 and 166–167 (DL).

This sequence belongs to the UPF0677 family.

In terms of biological role, exhibits S-adenosyl-L-methionine-dependent methyltransferase activity. In Mycobacterium marinum (strain ATCC BAA-535 / M), this protein is Putative S-adenosyl-L-methionine-dependent methyltransferase MMAR_0356.